Reading from the N-terminus, the 138-residue chain is Protein X (138 aa).

Residues 20–43 form a disordered region; that stretch reads PLRGQPSGPSVSGTSAGSPSSAAS. Positions 25-43 are enriched in low complexity; sequence PSGPSVSGTSAGSPSSAAS. The mitochondrial targeting sequence stretch occupies residues 68–113; that stretch reads PCCLGFTCADLRTMDSTVNFVPWHAKRQLGMMQKDFWTAYIRDQLL.

The protein belongs to the orthohepadnavirus protein X family. As to quaternary structure, may form homodimer. May interact with host CEBPA, CFLAR, CREB1, DDB1, E4F1, HBXIP, HSPD1/HSP60, NFKBIA, POLR2E and SMAD4. Interacts with host SMC5-SMC6 complex and induces its degradation. Interacts with host TRPC4AP; leading to prevent ubiquitination of TRPC4AP. Interacts with host PLSCR1; this interaction promotes ubiquitination and degradation of HBx and impairs HBx-mediated cell proliferation. Post-translationally, a fraction may be phosphorylated in insect cells and HepG2 cells, a human hepatoblastoma cell line. Phosphorylated in vitro by host protein kinase C or mitogen-activated protein kinase. N-acetylated in insect cells.

It localises to the host cytoplasm. Its subcellular location is the host nucleus. The protein localises to the host mitochondrion. In terms of biological role, multifunctional protein that plays a role in silencing host antiviral defenses and promoting viral transcription. Does not seem to be essential for HBV infection. May be directly involved in development of cirrhosis and liver cancer (hepatocellular carcinoma). Most of cytosolic activities involve modulation of cytosolic calcium. The effect on apoptosis is controversial depending on the cell types in which the studies have been conducted. May induce apoptosis by localizing in mitochondria and causing loss of mitochondrial membrane potential. May also modulate apoptosis by binding host CFLAR, a key regulator of the death-inducing signaling complex (DISC). Promotes viral transcription by using the host E3 ubiquitin ligase DDB1 to target the SMC5-SMC6 complex to proteasomal degradation. This host complex would otherwise bind to viral episomal DNA, and prevents its transcription. Moderately stimulates transcription of many different viral and cellular transcription elements. Promoters and enhancers stimulated by HBx contain DNA binding sites for NF-kappa-B, AP-1, AP-2, c-EBP, ATF/CREB, or the calcium-activated factor NF-AT. The sequence is that of Protein X from Ground squirrel hepatitis virus (strain 27) (GSHV).